The sequence spans 329 residues: Putative dehydrogenase RB0419 (329 aa).

Belongs to the ornithine cyclodeaminase/mu-crystallin family.

This is Putative dehydrogenase RB0419 from Rhizobium meliloti (strain 1021) (Ensifer meliloti).